The chain runs to 338 residues: uncharacterized protein (338 aa).

An N-terminal signal peptide occupies residues 1-29; the sequence is MIKQLCKNITICTLALSTTFTVLPATSFA.

Belongs to the aerolysin family.

This is an uncharacterized protein from Staphylococcus aureus (strain USA300).